Consider the following 58-residue polypeptide: Birtoxin (58 aa).

The LCN-type CS-alpha/beta domain maps to 3–58 (VPGNYPLDKDGNTYKCFLLGGNEECLNVCKLHGVQYGYCYASKCWCEYLEDDKDSV). Disulfide bonds link C18/C41, C27/C46, and C31/C48.

As to expression, expressed by the venom gland.

It localises to the secreted. Its function is as follows. Beta toxins bind voltage-independently at site-4 of sodium channels (Nav) and shift the voltage of activation toward more negative potentials thereby affecting sodium channel activation and promoting spontaneous and repetitive firing. Moderately toxic, but very high abundant. Does not target reptilian channels. Does not produce effect when administered to blowfly and cabbage looper larvae. In mice, produces convulsions, tremors, increased ventilation and, subsequently, death. This is Birtoxin from Parabuthus transvaalicus (Transvaal thick-tailed scorpion).